The following is a 79-amino-acid chain: Serine protease inhibitor Kazal-type 1 (79 aa).

An N-terminal signal peptide occupies residues 1-23; it reads MKVTGIFLLSALALLSLSGNTGA. The Kazal-like domain maps to 26 to 79; that stretch reads LGREAKCYNELNGCTKIYDPVCGTDGNTYPNECVLCFENRKRQTSILIQKSGPC. Disulfide bonds link Cys32–Cys61, Cys39–Cys58, and Cys47–Cys79.

The protein localises to the secreted. Serine protease inhibitor which exhibits anti-trypsin activity. In the pancreas, protects against trypsin-catalyzed premature activation of zymogens. Its function is as follows. In the male reproductive tract, binds to sperm heads where it modulates sperm capacitance by inhibiting calcium uptake and nitrogen oxide (NO) production. The polypeptide is Serine protease inhibitor Kazal-type 1 (SPINK1) (Homo sapiens (Human)).